A 208-amino-acid polypeptide reads, in one-letter code: Large ribosomal subunit protein bL25 (208 aa).

It belongs to the bacterial ribosomal protein bL25 family. CTC subfamily. In terms of assembly, part of the 50S ribosomal subunit; part of the 5S rRNA/L5/L18/L25 subcomplex. Contacts the 5S rRNA. Binds to the 5S rRNA independently of L5 and L18.

This is one of the proteins that binds to the 5S RNA in the ribosome where it forms part of the central protuberance. The protein is Large ribosomal subunit protein bL25 of Leptothrix cholodnii (strain ATCC 51168 / LMG 8142 / SP-6) (Leptothrix discophora (strain SP-6)).